The chain runs to 285 residues: Protoheme IX farnesyltransferase (285 aa).

The next 9 helical transmembrane spans lie at 13 to 33 (LGKLGVVSLLDLAAVAGAFLA), 40 to 60 (LLPIIPMFIGGTLASMGAMII), 89 to 109 (EAIIVGSLLAILGTALGFIDN), 110 to 130 (ILTAFFIALGVVIYIFVYTIL), 137 to 157 (LNIVIGGFAGSAAAWAGYTSL), 165 to 185 (GFLLGFLIFMWTPGHFWSLAL), 194 to 214 (AHYPMLPAVVGITTSARAIAI), 230 to 252 (INLIALIAFSILSLFLMFLSYRL), and 265 to 285 (FIFSNIYLMLILLIMIIVKLI).

Belongs to the UbiA prenyltransferase family. Protoheme IX farnesyltransferase subfamily.

The protein resides in the cell membrane. It carries out the reaction heme b + (2E,6E)-farnesyl diphosphate + H2O = Fe(II)-heme o + diphosphate. It functions in the pathway porphyrin-containing compound metabolism; heme O biosynthesis; heme O from protoheme: step 1/1. In terms of biological role, converts heme B (protoheme IX) to heme O by substitution of the vinyl group on carbon 2 of heme B porphyrin ring with a hydroxyethyl farnesyl side group. The protein is Protoheme IX farnesyltransferase of Saccharolobus islandicus (strain Y.N.15.51 / Yellowstone #2) (Sulfolobus islandicus).